Reading from the N-terminus, the 549-residue chain is Glucose-6-phosphate isomerase (549 aa).

The active-site Proton donor is the Glu-352. Catalysis depends on residues His-383 and Lys-511.

It belongs to the GPI family.

Its subcellular location is the cytoplasm. The enzyme catalyses alpha-D-glucose 6-phosphate = beta-D-fructose 6-phosphate. The protein operates within carbohydrate biosynthesis; gluconeogenesis. It functions in the pathway carbohydrate degradation; glycolysis; D-glyceraldehyde 3-phosphate and glycerone phosphate from D-glucose: step 2/4. Functionally, catalyzes the reversible isomerization of glucose-6-phosphate to fructose-6-phosphate. The sequence is that of Glucose-6-phosphate isomerase from Methylocella silvestris (strain DSM 15510 / CIP 108128 / LMG 27833 / NCIMB 13906 / BL2).